Here is a 371-residue protein sequence, read N- to C-terminus: MAQHDFAPAWLNFPTPPPSTKPFLYAEKRSESLGRSDCAFNVNRQRHNSSEAFDSSFGGNLKKREKNVWRPQSRSAAEPTWQREASLHLYSSNLQRVNSQLRSERNTSEFDLTRSLDREDCKTFEAEDFSFLYPEHERGKKLFTARLWEYPMNAGSTSPQMLGIKKGLMDDFSLSGYSIGVGNQSLPDKHWAGIKKEECKSLSKDNNIGSFYQDCPPENYIPNTSLHAELLSVDPCSLEEEEDTHLNNRNDSCPEMDINLNFDENENSEDNVNTLISGQISPAYAQDGVLSSSLEAEFKLLREMGWQENDESCAPLTEDEMREFQAISEQLQKNGLRKHVFLRDALAFDLFQDAVQKEDSETSSSDTSDDE.

This sequence belongs to the vasculin family.

The protein localises to the nucleus. Functionally, functions as a GC-rich promoter-specific transactivating transcription factor. The chain is Vasculin (gpbp1) from Xenopus laevis (African clawed frog).